The following is a 747-amino-acid chain: NAD-dependent protein deacetylase sirtuin-1 (747 aa).

The tract at residues 1–135 (MADEAALALQ…DDEGEEEEEA (135 aa)) is disordered. Position 2 is an N-acetylalanine (Ala2). Residues 2-139 (ADEAALALQP…EEEEEAAAAA (138 aa)) are interaction with CLOCK. Positions 2–268 (ADEAALALQP…LTGAGVSVSC (267 aa)) are interaction with H1-4. Phosphoserine is present on residues Ser14 and Ser26. At Ser27 the chain carries Phosphoserine; by MAPK8. A Nuclear localization signal motif is present at residues 32-39 (PLRKRPRR). A Phosphoserine; by MAPK8 modification is found at Ser47. A compositionally biased stretch (low complexity) spans 61-100 (PAAARGCPGAAAAALWREAEAEAAAAGGEQEAQATAAAGE). Residues 120–135 (LYDEDDDDEGEEEEEA) show a composition bias toward acidic residues. The short motif at 138–145 (AAIGYRDN) is the Nuclear export signal element. The interval 143–541 (RDNLLFGDEI…LHVSEDSSSP (399 aa)) is interaction with CCAR2. Residues Ser159, Ser162, Ser172, and Ser173 each carry the phosphoserine modification. The short motif at 223 to 230 (IVINILSE) is the Nuclear localization signal element. The region spanning 236 to 496 (KRKDINTIED…NELCHRLGGE (261 aa)) is the Deacetylase sirtuin-type domain. N6-acetyllysine is present on Lys238. A required for interaction with the sumoylated form of CCAR2 region spans residues 256 to 259 (IIVL). NAD(+)-binding positions include 261–280 (GAGV…DGIY) and 345–348 (QNID). The active-site Proton acceptor is His363. Zn(2+) contacts are provided by Cys371 and Cys374. An N6-acetyllysine modification is found at Lys377. Residues Cys395 and Cys398 each coordinate Zn(2+). Cys395 and Cys398 each carry S-nitrosocysteine. The short motif at 425–431 (AMKYDKD) is the Nuclear export signal element. Lys430 carries the N6-acetyllysine modification. NAD(+) is bound by residues 440 to 442 (GSS), 465 to 467 (NRE), and Cys482. Lys513 bears the N6-acetyllysine mark. Disordered stretches follow at residues 523-549 (YLSE…PPDS) and 562-587 (SNDD…TSRN). At Thr530 the chain carries Phosphothreonine; by DYRK1A, DYRK3 and MAPK8. The residue at position 535 (Ser535) is a Phosphoserine. The segment covering 537-549 (DSSSPERTSPPDS) has biased composition (polar residues). The interval 538–540 (SSS) is phosphorylated at one of three serine residues. Phosphothreonine is present on Thr544. Ser545 is modified (phosphoserine). Over residues 569-580 (SESKGCMEEKPQ) the composition is skewed to basic and acidic residues. The residue at position 610 (Lys610) is an N6-acetyllysine. 2 positions are modified to phosphoserine; by CaMK2: Ser659 and Ser661. A disordered region spans residues 663 to 726 (DDVLSSSSCG…FGTDGDDQEA (64 aa)). Low complexity predominate over residues 666–677 (LSSSSCGSNSDS). Over residues 687–707 (EPMEDESEIEEFYNGLEDEPD) the composition is skewed to acidic residues. Residue Thr719 is modified to Phosphothreonine. At Ser747 the chain carries Phosphoserine.

This sequence belongs to the sirtuin family. Class I subfamily. As to quaternary structure, interacts with XBP1 isoform 2. Found in a complex with PCAF and MYOD1. Interacts with FOXO1; the interaction deacetylates FOXO1, resulting in its nuclear retention and promotion of its transcriptional activity Component of the eNoSC complex, composed of SIRT1, SUV39H1 and RRP8. Interacts with HES1, HEY2 and PML. Interacts with RPS19BP1/AROS. Interacts with CCAR2 (via N-terminus); the interaction disrupts the interaction between SIRT1 and p53/TP53. Interacts with SETD7; the interaction induces the dissociation of SIRT1 from p53/TP53 and increases p53/TP53 activity. Interacts with MYCN, NR1I2, CREBZF, TSC2, TLE1, FOS, JUN, NR0B2, PPARG, NCOR, IRS1, IRS2 and NMNAT1. Interacts with HNF1A; the interaction occurs under nutrient restriction. Interacts with SUZ12; the interaction mediates the association with the PRC4 histone methylation complex which is specific as an association with PCR2 and PCR3 complex variants is not found. Interacts with BCL6; leads to a epigenetic repression of specific target genes. Interacts with CLOCK, BMAL1 and PER2. Interacts with PPARA; the interaction seems to be modulated by NAD(+) levels. Interacts with NR1H3 and this interaction is inhibited in the presence of CCAR2. Interacts with CHEK2. Interacts with p53/TP53. Exhibits a preferential interaction with sumoylated CCAR2 over its unmodified form. Interacts with PACS2. Interacts with SIRT7. Interacts with PUS7. Interacts with TULP3. Interacts with MORN3; the interaction enhances the ubiquitination of p53/TP53. In terms of assembly, (Microbial infection) Interacts with HIV-1 Tat. The cofactor is Zn(2+). Post-translationally, methylated on multiple lysine residues; methylation is enhanced after DNA damage and is dispensable for deacetylase activity toward p53/TP53. Phosphorylated. Phosphorylated by STK4/MST1, resulting in inhibition of SIRT1-mediated p53/TP53 deacetylation. Phosphorylation by MAPK8/JNK1 at Ser-27, Ser-47, and Thr-530 leads to increased nuclear localization and enzymatic activity. Phosphorylation at Thr-530 by DYRK1A and DYRK3 activates deacetylase activity and promotes cell survival. Phosphorylation by mammalian target of rapamycin complex 1 (mTORC1) at Ser-47 inhibits deacetylation activity. Phosphorylated by CaMK2, leading to increased p53/TP53 and NF-kappa-B p65/RELA deacetylation activity. Phosphorylation at Ser-27 implicating MAPK9 is linked to protein stability. There is some ambiguity for some phosphosites: Ser-159/Ser-162 and Thr-544/Ser-545. In terms of processing, proteolytically cleaved by cathepsin B upon TNF-alpha treatment to yield catalytic inactive but stable SirtT1 75 kDa fragment (75SirT1). Post-translationally, S-nitrosylated by GAPDH, leading to inhibit the NAD-dependent protein deacetylase activity. Acetylated at various Lys residues. Deacetylated via an autocatalytic mechanism. Autodeacetylation at Lys-238 promotes its protein deacetylase activity. In terms of processing, ubiquitinated; leading to degradation. Deubiquitinated by USP22; leading to stabilization. Widely expressed.

The protein resides in the nucleus. Its subcellular location is the PML body. The protein localises to the cytoplasm. It localises to the mitochondrion. The enzyme catalyses N(6)-acetyl-L-lysyl-[protein] + NAD(+) + H2O = 2''-O-acetyl-ADP-D-ribose + nicotinamide + L-lysyl-[protein]. It carries out the reaction N(6)-propanoyl-L-lysyl-[protein] + NAD(+) + H2O = 3''-O-propanoyl-ADP-D-ribose + nicotinamide + L-lysyl-[protein]. The catalysed reaction is N(6)-(2E)-butenoyl-L-lysyl-[protein] + NAD(+) + H2O = 2''-O-(2E)-but-2-enoyl-ADP-D-ribose + nicotinamide + L-lysyl-[protein]. It catalyses the reaction N(6)-[(S)-lactoyl]-L-lysyl-[protein] + NAD(+) + H2O = 2''-O-(S)-lactoyl-ADP-D-ribose + nicotinamide + L-lysyl-[protein]. With respect to regulation, inhibited by nicotinamide. Activated by resveratrol (3,5,4'-trihydroxy-trans-stilbene), butein (3,4,2',4'-tetrahydroxychalcone), piceatannol (3,5,3',4'-tetrahydroxy-trans-stilbene), Isoliquiritigenin (4,2',4'-trihydroxychalcone), fisetin (3,7,3',4'-tetrahydroxyflavone) and quercetin (3,5,7,3',4'-pentahydroxyflavone). MAPK8/JNK1 and RPS19BP1/AROS act as positive regulators of deacetylation activity. Negatively regulated by CCAR2. NAD-dependent protein deacetylase that links transcriptional regulation directly to intracellular energetics and participates in the coordination of several separated cellular functions such as cell cycle, response to DNA damage, metabolism, apoptosis and autophagy. Can modulate chromatin function through deacetylation of histones and can promote alterations in the methylation of histones and DNA, leading to transcriptional repression. Deacetylates a broad range of transcription factors and coregulators, thereby regulating target gene expression positively and negatively. Serves as a sensor of the cytosolic ratio of NAD(+)/NADH which is altered by glucose deprivation and metabolic changes associated with caloric restriction. Is essential in skeletal muscle cell differentiation and in response to low nutrients mediates the inhibitory effect on skeletal myoblast differentiation which also involves 5'-AMP-activated protein kinase (AMPK) and nicotinamide phosphoribosyltransferase (NAMPT). Component of the eNoSC (energy-dependent nucleolar silencing) complex, a complex that mediates silencing of rDNA in response to intracellular energy status and acts by recruiting histone-modifying enzymes. The eNoSC complex is able to sense the energy status of cell: upon glucose starvation, elevation of NAD(+)/NADP(+) ratio activates SIRT1, leading to histone H3 deacetylation followed by dimethylation of H3 at 'Lys-9' (H3K9me2) by SUV39H1 and the formation of silent chromatin in the rDNA locus. Deacetylates 'Lys-266' of SUV39H1, leading to its activation. Inhibits skeletal muscle differentiation by deacetylating PCAF and MYOD1. Deacetylates H2A and 'Lys-26' of H1-4. Deacetylates 'Lys-16' of histone H4 (in vitro). Involved in NR0B2/SHP corepression function through chromatin remodeling: Recruited to LRH1 target gene promoters by NR0B2/SHP thereby stimulating histone H3 and H4 deacetylation leading to transcriptional repression. Proposed to contribute to genomic integrity via positive regulation of telomere length; however, reports on localization to pericentromeric heterochromatin are conflicting. Proposed to play a role in constitutive heterochromatin (CH) formation and/or maintenance through regulation of the available pool of nuclear SUV39H1. Upon oxidative/metabolic stress decreases SUV39H1 degradation by inhibiting SUV39H1 polyubiquitination by MDM2. This increase in SUV39H1 levels enhances SUV39H1 turnover in CH, which in turn seems to accelerate renewal of the heterochromatin which correlates with greater genomic integrity during stress response. Deacetylates 'Lys-382' of p53/TP53 and impairs its ability to induce transcription-dependent proapoptotic program and modulate cell senescence. Deacetylates TAF1B and thereby represses rDNA transcription by the RNA polymerase I. Deacetylates MYC, promotes the association of MYC with MAX and decreases MYC stability leading to compromised transformational capability. Deacetylates FOXO3 in response to oxidative stress thereby increasing its ability to induce cell cycle arrest and resistance to oxidative stress but inhibiting FOXO3-mediated induction of apoptosis transcriptional activity; also leading to FOXO3 ubiquitination and protesomal degradation. Appears to have a similar effect on MLLT7/FOXO4 in regulation of transcriptional activity and apoptosis. Deacetylates DNMT1; thereby impairs DNMT1 methyltransferase-independent transcription repressor activity, modulates DNMT1 cell cycle regulatory function and DNMT1-mediated gene silencing. Deacetylates RELA/NF-kappa-B p65 thereby inhibiting its transactivating potential and augments apoptosis in response to TNF-alpha. Deacetylates HIF1A, KAT5/TIP60, RB1 and HIC1. Deacetylates FOXO1 resulting in its nuclear retention and enhancement of its transcriptional activity leading to increased gluconeogenesis in liver. Inhibits E2F1 transcriptional activity and apoptotic function, possibly by deacetylation. Involved in HES1- and HEY2-mediated transcriptional repression. In cooperation with MYCN seems to be involved in transcriptional repression of DUSP6/MAPK3 leading to MYCN stabilization by phosphorylation at 'Ser-62'. Deacetylates MEF2D. Required for antagonist-mediated transcription suppression of AR-dependent genes which may be linked to local deacetylation of histone H3. Represses HNF1A-mediated transcription. Required for the repression of ESRRG by CREBZF. Deacetylates NR1H3 and NR1H2 and deacetylation of NR1H3 at 'Lys-434' positively regulates transcription of NR1H3:RXR target genes, promotes NR1H3 proteasomal degradation and results in cholesterol efflux; a promoter clearing mechanism after reach round of transcription is proposed. Involved in lipid metabolism: deacetylates LPIN1, thereby inhibiting diacylglycerol synthesis. Implicated in regulation of adipogenesis and fat mobilization in white adipocytes by repression of PPARG which probably involves association with NCOR1 and SMRT/NCOR2. Deacetylates p300/EP300 and PRMT1. Deacetylates ACSS2 leading to its activation, and HMGCS1 deacetylation. Involved in liver and muscle metabolism. Through deacetylation and activation of PPARGC1A is required to activate fatty acid oxidation in skeletal muscle under low-glucose conditions and is involved in glucose homeostasis. Involved in regulation of PPARA and fatty acid beta-oxidation in liver. Involved in positive regulation of insulin secretion in pancreatic beta cells in response to glucose; the function seems to imply transcriptional repression of UCP2. Proposed to deacetylate IRS2 thereby facilitating its insulin-induced tyrosine phosphorylation. Deacetylates SREBF1 isoform SREBP-1C thereby decreasing its stability and transactivation in lipogenic gene expression. Involved in DNA damage response by repressing genes which are involved in DNA repair, such as XPC and TP73, deacetylating XRCC6/Ku70, and facilitating recruitment of additional factors to sites of damaged DNA, such as SIRT1-deacetylated NBN can recruit ATM to initiate DNA repair and SIRT1-deacetylated XPA interacts with RPA2. Also involved in DNA repair of DNA double-strand breaks by homologous recombination and specifically single-strand annealing independently of XRCC6/Ku70 and NBN. Promotes DNA double-strand breaks by mediating deacetylation of SIRT6. Transcriptional suppression of XPC probably involves an E2F4:RBL2 suppressor complex and protein kinase B (AKT) signaling. Transcriptional suppression of TP73 probably involves E2F4 and PCAF. Deacetylates WRN thereby regulating its helicase and exonuclease activities and regulates WRN nuclear translocation in response to DNA damage. Deacetylates APEX1 at 'Lys-6' and 'Lys-7' and stimulates cellular AP endonuclease activity by promoting the association of APEX1 to XRCC1. Catalyzes deacetylation of ERCC4/XPF, thereby impairing interaction with ERCC1 and nucleotide excision repair (NER). Increases p53/TP53-mediated transcription-independent apoptosis by blocking nuclear translocation of cytoplasmic p53/TP53 and probably redirecting it to mitochondria. Deacetylates XRCC6/Ku70 at 'Lys-539' and 'Lys-542' causing it to sequester BAX away from mitochondria thereby inhibiting stress-induced apoptosis. Is involved in autophagy, presumably by deacetylating ATG5, ATG7 and MAP1LC3B/ATG8. Deacetylates AKT1 which leads to enhanced binding of AKT1 and PDK1 to PIP3 and promotes their activation. Proposed to play role in regulation of STK11/LBK1-dependent AMPK signaling pathways implicated in cellular senescence which seems to involve the regulation of the acetylation status of STK11/LBK1. Can deacetylate STK11/LBK1 and thereby increase its activity, cytoplasmic localization and association with STRAD; however, the relevance of such activity in normal cells is unclear. In endothelial cells is shown to inhibit STK11/LBK1 activity and to promote its degradation. Deacetylates SMAD7 at 'Lys-64' and 'Lys-70' thereby promoting its degradation. Deacetylates CIITA and augments its MHC class II transactivation and contributes to its stability. Deacetylates MECOM/EVI1. Deacetylates PML at 'Lys-487' and this deacetylation promotes PML control of PER2 nuclear localization. During the neurogenic transition, represses selective NOTCH1-target genes through histone deacetylation in a BCL6-dependent manner and leading to neuronal differentiation. Regulates the circadian expression of several core clock genes, including BMAL1, RORC, PER2 and CRY1 and plays a critical role in maintaining a controlled rhythmicity in histone acetylation, thereby contributing to circadian chromatin remodeling. Deacetylates BMAL1 and histones at the circadian gene promoters in order to facilitate repression by inhibitory components of the circadian oscillator. Deacetylates PER2, facilitating its ubiquitination and degradation by the proteasome. Protects cardiomyocytes against palmitate-induced apoptosis. Deacetylates XBP1 isoform 2; deacetylation decreases protein stability of XBP1 isoform 2 and inhibits its transcriptional activity. Deacetylates PCK1 and directs its activity toward phosphoenolpyruvate production promoting gluconeogenesis. Involved in the CCAR2-mediated regulation of PCK1 and NR1D1. Deacetylates CTNB1 at 'Lys-49'. In POMC (pro-opiomelanocortin) neurons, required for leptin-induced activation of PI3K signaling. Deacetylates SOX9; promoting SOX9 nuclear localization and transactivation activity. Involved in the regulation of centrosome duplication: deacetylates CENATAC in G1 phase, allowing for SASS6 accumulation on the centrosome and subsequent procentriole assembly. Deacetylates NDC80/HEC1. In addition to protein deacetylase activity, also acts as a protein-lysine deacylase by mediating protein delactylation, depropionylation and decrotonylation. Mediates depropionylation of Osterix (SP7). Catalyzes decrotonylation of histones; it however does not represent a major histone decrotonylase. Mediates protein delactylation of TEAD1 and YAP1. Functionally, deacetylates 'Lys-382' of p53/TP53, however with lower activity than isoform 1. In combination, the two isoforms exert an additive effect. Isoform 2 regulates p53/TP53 expression and cellular stress response and is in turn repressed by p53/TP53 presenting a SIRT1 isoform-dependent auto-regulatory loop. In terms of biological role, catalytically inactive 75SirT1 may be involved in regulation of apoptosis. May be involved in protecting chondrocytes from apoptotic death by associating with cytochrome C and interfering with apoptosome assembly. Its function is as follows. (Microbial infection) In case of HIV-1 infection, interacts with and deacetylates the viral Tat protein. The viral Tat protein inhibits SIRT1 deacetylation activity toward RELA/NF-kappa-B p65, thereby potentiates its transcriptional activity and SIRT1 is proposed to contribute to T-cell hyperactivation during infection. The sequence is that of NAD-dependent protein deacetylase sirtuin-1 from Homo sapiens (Human).